The chain runs to 1014 residues: Probable LRR receptor-like serine/threonine-protein kinase At1g07650 (1014 aa).

The N-terminal stretch at 1–23 is a signal peptide; it reads MIYLHRIYFIIVLFTLIFHGRLG. The Extracellular portion of the chain corresponds to 24–619; the sequence is FSDNNKLHEA…KPPVYYDTKD (596 aa). Residues N76, N87, and N101 are each glycosylated (N-linked (GlcNAc...) asparagine). LRR repeat units lie at residues 89 to 112, 113 to 137, 139 to 160, 161 to 184, 186 to 207, 208 to 234, 256 to 279, 280 to 304, 305 to 327, 329 to 352, and 354 to 376; these read SCHV…EFSK, LRHL…WASM, LEDL…LTRL, TMLR…IGQL, HLEK…KLGL, LKNL…NWTR, LTSL…PLKN, LESI…IGDL, KKLK…SFEN, KKAD…FVER, and KNVD…DCNR. Residue N165 is glycosylated (N-linked (GlcNAc...) asparagine). N-linked (GlcNAc...) asparagine glycans are attached at residues N210, N220, and N231. Residues N362, N389, N474, N481, and N511 are each glycosylated (N-linked (GlcNAc...) asparagine). Residues 516 to 539 form an LRR 12 repeat; sequence LHFAEIIFTDDNTLYSLGKRLFDI. Residue N570 is glycosylated (N-linked (GlcNAc...) asparagine). The helical transmembrane segment at 620–640 threads the bilayer; sequence IILKVGVPVAAATLLLFIIVG. The Cytoplasmic portion of the chain corresponds to 641–1014; the sequence is VFWKKRRDKN…DAEEKTGLLD (374 aa). T667 carries the post-translational modification Phosphothreonine. Residues 678–960 enclose the Protein kinase domain; the sequence is FDVTRKIGEG…EGKTAMQELL (283 aa). Residues 684 to 692 and K706 each bind ATP; that span reads IGEGGFGSV. Residue Y751 is modified to Phosphotyrosine. D805 acts as the Proton acceptor in catalysis. Residues S809 and S838 each carry the phosphoserine modification. Phosphothreonine is present on residues T839 and T844. Position 852 is a phosphotyrosine (Y852). S989 carries the phosphoserine modification. Over residues 989–1002 the composition is skewed to polar residues; that stretch reads SFSTSGPRTASANS. Residues 989–1014 are disordered; sequence SFSTSGPRTASANSLVDAEEKTGLLD.

The protein belongs to the protein kinase superfamily. Ser/Thr protein kinase family.

The protein localises to the membrane. It carries out the reaction L-seryl-[protein] + ATP = O-phospho-L-seryl-[protein] + ADP + H(+). The catalysed reaction is L-threonyl-[protein] + ATP = O-phospho-L-threonyl-[protein] + ADP + H(+). This chain is Probable LRR receptor-like serine/threonine-protein kinase At1g07650, found in Arabidopsis thaliana (Mouse-ear cress).